We begin with the raw amino-acid sequence, 138 residues long: DNA-directed RNA polymerase subunit omega (138 aa).

The segment at Gly-104–Ser-138 is disordered. Polar residues predominate over residues Phe-126 to Ser-138.

The protein belongs to the RNA polymerase subunit omega family. In terms of assembly, the RNAP catalytic core consists of 2 alpha, 1 beta, 1 beta' and 1 omega subunit. When a sigma factor is associated with the core the holoenzyme is formed, which can initiate transcription.

It carries out the reaction RNA(n) + a ribonucleoside 5'-triphosphate = RNA(n+1) + diphosphate. Its function is as follows. Promotes RNA polymerase assembly. Latches the N- and C-terminal regions of the beta' subunit thereby facilitating its interaction with the beta and alpha subunits. The protein is DNA-directed RNA polymerase subunit omega of Ehrlichia chaffeensis (strain ATCC CRL-10679 / Arkansas).